The chain runs to 517 residues: Putative thymidine phosphorylase (517 aa).

Belongs to the thymidine/pyrimidine-nucleoside phosphorylase family. Type 2 subfamily.

The catalysed reaction is thymidine + phosphate = 2-deoxy-alpha-D-ribose 1-phosphate + thymine. This Legionella pneumophila (strain Paris) protein is Putative thymidine phosphorylase.